Here is a 458-residue protein sequence, read N- to C-terminus: Divalent metal cation transporter MntH (458 aa).

11 consecutive transmembrane segments (helical) span residues glycine 38–methionine 58, serine 76–alanine 96, glycine 119–isoleucine 139, methionine 151–methionine 171, alanine 180–alanine 200, methionine 223–glycine 243, leucine 275–glycine 295, isoleucine 315–serine 335, leucine 370–isoleucine 390, leucine 393–valine 413, and phenylalanine 437–valine 457.

The protein belongs to the NRAMP family.

It localises to the cell membrane. Its function is as follows. H(+)-stimulated, divalent metal cation uptake system. The polypeptide is Divalent metal cation transporter MntH (Lacticaseibacillus paracasei (strain ATCC 334 / BCRC 17002 / CCUG 31169 / CIP 107868 / KCTC 3260 / NRRL B-441) (Lactobacillus paracasei)).